The following is a 122-amino-acid chain: Protein FAM223A (122 aa).

This sequence belongs to the FAM223 family.

The sequence is that of Protein FAM223A (FAM223A) from Homo sapiens (Human).